The sequence spans 223 residues: uncharacterized protein (223 aa).

The next 7 helical transmembrane spans lie at 25–45 (TYFLLSMTLVTSAIAAMATMA), 46–66 (IGISPIVALVMQLAAIGILFF), 78–98 (LVWTFVFTGLMGGALGPMLNF), 105–125 (GPIVIAQALGLTGMVFLGLSA), 140–160 (FLFAGLIIVIVAALINIFVGS), 161–181 (TVAHLAISSVSALVFSGFILF), and 199–219 (ISMYLNILNLFTSLLSILGIM).

This sequence belongs to the BI1 family.

The protein resides in the cell membrane. This is an uncharacterized protein from Vibrio cholerae serotype O1 (strain ATCC 39315 / El Tor Inaba N16961).